A 276-amino-acid chain; its full sequence is Sulfate transport system permease protein CysW (276 aa).

6 consecutive transmembrane segments (helical) span residues 16 to 36 (LIAL…IAVF), 64 to 84 (VVMA…AAWV), 99 to 119 (VLDL…VLLY), 136 to 156 (IIFS…PFVA), 212 to 232 (FGAV…LPIF), and 242 to 262 (TEAA…TLVL). The 208-residue stretch at 60–267 (LQLTVVMALI…VTLVLKEILE (208 aa)) folds into the ABC transmembrane type-1 domain.

Belongs to the binding-protein-dependent transport system permease family. CysTW subfamily. As to quaternary structure, the complex is composed of two ATP-binding proteins (CysA), two transmembrane proteins (CysT and CysW) and a solute-binding protein (CysP).

It localises to the cell inner membrane. In terms of biological role, part of the ABC transporter complex CysAWTP (TC 3.A.1.6.1) involved in sulfate/thiosulfate import. Probably responsible for the translocation of the substrate across the membrane. The polypeptide is Sulfate transport system permease protein CysW (cysW) (Synechocystis sp. (strain ATCC 27184 / PCC 6803 / Kazusa)).